The sequence spans 708 residues: RNA-directed RNA polymerase catalytic subunit (708 aa).

The 187-residue stretch at 281–467 folds into the RdRp catalytic domain; sequence RIKEIGMKNQ…GLNVSQKKSF (187 aa).

As to quaternary structure, the RNA polymerase is composed of three subunits: PB1, PB2 and PA.

It catalyses the reaction RNA(n) + a ribonucleoside 5'-triphosphate = RNA(n+1) + diphosphate. Functionally, RNA-dependent RNA polymerase which is responsible for replication and transcription of virus segments. Binds the promoter sequence of the encapsidated viral RNA. Displays an endonuclease activity involved in cap-stealing. Cleaves cellular pre-mRNA to generate primers for viral transcription. In Infectious salmon anemia virus (isolate Atlantic salmon/Norway/810/9/99) (ISAV), this protein is RNA-directed RNA polymerase catalytic subunit.